The sequence spans 67 residues: ATP synthase F(0) complex subunit 8 (67 aa).

A helical transmembrane segment spans residues 8–24 (TWFIMIFSMFLTLFILF). Lys54 carries the post-translational modification N6-acetyllysine; alternate. N6-succinyllysine; alternate is present on Lys54. The residue at position 57 (Lys57) is an N6-acetyllysine.

Belongs to the ATPase protein 8 family. In terms of assembly, component of the ATP synthase complex composed at least of ATP5F1A/subunit alpha, ATP5F1B/subunit beta, ATP5MC1/subunit c (homooctomer), MT-ATP6/subunit a, MT-ATP8/subunit 8, ATP5ME/subunit e, ATP5MF/subunit f, ATP5MG/subunit g, ATP5MK/subunit k, ATP5MJ/subunit j, ATP5F1C/subunit gamma, ATP5F1D/subunit delta, ATP5F1E/subunit epsilon, ATP5PF/subunit F6, ATP5PB/subunit b, ATP5PD/subunit d, ATP5PO/subunit OSCP. ATP synthase complex consists of a soluble F(1) head domain (subunits alpha(3) and beta(3)) - the catalytic core - and a membrane F(0) domain - the membrane proton channel (subunits c, a, 8, e, f, g, k and j). These two domains are linked by a central stalk (subunits gamma, delta, and epsilon) rotating inside the F1 region and a stationary peripheral stalk (subunits F6, b, d, and OSCP). Interacts with PRICKLE3.

The protein resides in the mitochondrion membrane. Functionally, subunit 8, of the mitochondrial membrane ATP synthase complex (F(1)F(0) ATP synthase or Complex V) that produces ATP from ADP in the presence of a proton gradient across the membrane which is generated by electron transport complexes of the respiratory chain. ATP synthase complex consist of a soluble F(1) head domain - the catalytic core - and a membrane F(1) domain - the membrane proton channel. These two domains are linked by a central stalk rotating inside the F(1) region and a stationary peripheral stalk. During catalysis, ATP synthesis in the catalytic domain of F(1) is coupled via a rotary mechanism of the central stalk subunits to proton translocation. In vivo, can only synthesize ATP although its ATP hydrolase activity can be activated artificially in vitro. Part of the complex F(0) domain. In Canis lupus familiaris (Dog), this protein is ATP synthase F(0) complex subunit 8.